The sequence spans 23 residues: SV40 early leader protein (23 aa).

The tract at residues 1–23 (MQRPRPPRPLSYSRSSEEAFLEA) is disordered.

It belongs to the polyomavirus early leader protein family.

May play a role in the lytic cycle. This chain is SV40 early leader protein, found in Macaca (macaques).